Consider the following 908-residue polypeptide: Protein translocase subunit SecA (908 aa).

ATP-binding positions include Gln-87, Gly-105–Thr-109, and Asp-512. Positions Gly-866–Ser-908 are disordered. Residues Met-879–Arg-888 show a composition bias toward basic and acidic residues. Cys-892, Cys-894, Cys-903, and His-904 together coordinate Zn(2+). Residues Arg-898–Ser-908 are compositionally biased toward basic residues.

Belongs to the SecA family. Monomer and homodimer. Part of the essential Sec protein translocation apparatus which comprises SecA, SecYEG and auxiliary proteins SecDF-YajC and YidC. Requires Zn(2+) as cofactor.

The protein localises to the cell inner membrane. The protein resides in the cytoplasm. The catalysed reaction is ATP + H2O + cellular proteinSide 1 = ADP + phosphate + cellular proteinSide 2.. Part of the Sec protein translocase complex. Interacts with the SecYEG preprotein conducting channel. Has a central role in coupling the hydrolysis of ATP to the transfer of proteins into and across the cell membrane, serving both as a receptor for the preprotein-SecB complex and as an ATP-driven molecular motor driving the stepwise translocation of polypeptide chains across the membrane. This chain is Protein translocase subunit SecA, found in Shewanella oneidensis (strain ATCC 700550 / JCM 31522 / CIP 106686 / LMG 19005 / NCIMB 14063 / MR-1).